A 423-amino-acid polypeptide reads, in one-letter code: Osteomodulin (423 aa).

The signal sequence occupies residues 1–20 (MGCLRPIYVLFFCFVVRVYG). 6 positions are modified to sulfotyrosine: Tyr22, Tyr25, Tyr31, Tyr39, Tyr51, and Tyr77. Positions 53–91 (APFYQNILGCAKECFCPTNFPTSMYCDNRKLKTIPDIPM) constitute an LRRNT domain. 11 LRR repeats span residues 92–113 (HIQQ…SFIN), 116–129 (HLKE…KIKS), 142–164 (NLQQ…PKSL), 165–184 (ERLL…AMDG), 187–207 (NVTM…KGKI), 213–233 (KLMQ…GLPL), 234–255 (SLMY…YFQK), 258–279 (KLHA…IFNL), 281–294 (NLIE…KLKQ), 301–322 (NLEH…MMCP), and 331–353 (HLTY…IFFC). N-linked (GlcNAc...) asparagine glycans are attached at residues Asn113 and Asn121. Asn187 carries an N-linked (GlcNAc...) asparagine glycan. Residues Asn242 and Asn278 are each glycosylated (N-linked (GlcNAc...) asparagine). The N-linked (GlcNAc...) asparagine glycan is linked to Asn316. The cysteines at positions 321 and 353 are disulfide-linked. Residues 383–408 (YQDEEEEEEDDSQDHTLEGQEETEEH) are disordered. The span at 385–394 (DEEEEEEDDS) shows a compositional bias: acidic residues. A sulfotyrosine mark is found at Tyr413 and Tyr414.

Belongs to the small leucine-rich proteoglycan (SLRP) family. SLRP class II subfamily. In terms of assembly, binds the alpha(V)beta(3)-integrin. Post-translationally, glycosylated; contains keratan sulfate. As to expression, osteoblast and odontoblast. Expressed in femoral bone and calvaria tissues. Detected in femoral head, rib, tendon and bone marrow.

Its subcellular location is the secreted. The protein localises to the extracellular space. The protein resides in the extracellular matrix. Its function is as follows. May be implicated in biomineralization processes. Has a function in binding of osteoblasts via the alpha(V)beta(3)-integrin. The protein is Osteomodulin (Omd) of Rattus norvegicus (Rat).